Reading from the N-terminus, the 90-residue chain is Large ribosomal subunit protein eL33 (90 aa).

This sequence belongs to the eukaryotic ribosomal protein eL33 family.

The protein is Large ribosomal subunit protein eL33 of Methanopyrus kandleri (strain AV19 / DSM 6324 / JCM 9639 / NBRC 100938).